The primary structure comprises 504 residues: Probable alpha-L-arabinofuranosidase C (504 aa).

N-linked (GlcNAc...) asparagine glycans are attached at residues asparagine 152, asparagine 181, asparagine 269, and asparagine 467.

Belongs to the glycosyl hydrolase 51 family.

Its subcellular location is the secreted. The catalysed reaction is Hydrolysis of terminal non-reducing alpha-L-arabinofuranoside residues in alpha-L-arabinosides.. The protein operates within glycan metabolism; L-arabinan degradation. Functionally, alpha-L-arabinofuranosidase involved in the degradation of arabinoxylan, a major component of plant hemicellulose. Acts only on small linear 1,5-alpha-linked L-arabinofuranosyl oligosaccharides. The polypeptide is Probable alpha-L-arabinofuranosidase C (abfC) (Aspergillus terreus (strain NIH 2624 / FGSC A1156)).